The following is a 3674-amino-acid chain: Dystrophin-1 (3674 aa).

The segment at 1 to 25 is disordered; that stretch reads MLFSGASTAKPKKDEKKDKKSDRDP. A compositionally biased stretch (basic and acidic residues) spans 11-25; it reads PKKDEKKDKKSDRDP. The actin-binding stretch occupies residues 30–39; it reads QEWVFVRWAN. The Calponin-homology (CH) domain occupies 129-234; that stretch reads EKLSEAIKQW…YLMSLYLAMI (106 aa). A disordered region spans residues 265–325; sequence SQPSTSSSSA…KSGKSKKARR (61 aa). Spectrin repeat units lie at residues 327–435, 436–541, and 612–656; these read EQLA…VLQQ, QIHL…KLDG, and CELV…TLVK. Residues 655-674 are compositionally biased toward basic and acidic residues; sequence VKSGKADVKQVQESQNEQKE. Disordered stretches follow at residues 655–689, 968–991, 1587–1606, 1796–1833, and 2387–2466; these read VKSGKADVKQVQESQNEQKEQPASSEGLSTDTEGE, NSQMSNETVEKAETRKAEMEEKRR, ASAEKAPAPELRDARLSSPS, LSATEKKPVETVKSTIPDRPEVPEEPEKSSPDRTSRSS, and MNDS…GSTG. Residues 675 to 685 show a composition bias toward polar residues; sequence QPASSEGLSTD. Residues 975–991 are compositionally biased toward basic and acidic residues; that stretch reads TVEKAETRKAEMEEKRR. Residues 1796-1830 show a composition bias toward basic and acidic residues; sequence LSATEKKPVETVKSTIPDRPEVPEEPEKSSPDRTS. Over residues 2391–2411 the composition is skewed to polar residues; sequence GGDTTESRSTVVEMTSVHTKQ. Spectrin repeat units follow at residues 2576–2673, 2725–2789, 2792–2905, and 2926–3032; these read RNEM…VLEA, FKTL…RLEK, QEWE…RLKK, and QRLQ…AVRN. The region spanning 3047-3081 is the WW domain; sequence QSVTLPWQRAISKSNLLPYYIEQTSEKTQWEHPVW. The ZZ-type zinc finger occupies 3301-3357; it reads KHASKCNVCKMFPIIGIRYRCLTCFNCDLCQNCFFSQRTAKSHRTNHPMQEYCEKTT. Zn(2+) is bound by residues Cys-3306, Cys-3309, Cys-3321, Cys-3324, Cys-3330, Cys-3333, His-3343, and His-3347. Disordered regions lie at residues 3481-3522 and 3568-3645; these read STME…TQSQ and KQQA…QMQN. Over residues 3568 to 3579 the composition is skewed to polar residues; sequence KQQAPLSTNSLL.

In terms of assembly, component of the dystrophin glycoprotein complex (DGC). Interacts with dyb-1 and stn-1 to form the DGC. Interacts with stn-2. In terms of tissue distribution, expressed in body wall, head, pharyngeal and vulval muscles, from late embryogenesis to adulthood (at protein level).

The protein localises to the cell membrane. It localises to the sarcolemma. Its subcellular location is the cytoplasm. It is found in the cytoskeleton. Functionally, plays a role in cholinergic transmission and as a functional partner of dystrobrevin (dyb-1), necessary for muscle maintenance. Required for neuronal positioning. May play a role in the localization of slo-1 near dense bodies in the muscle. The sequence is that of Dystrophin-1 (dys-1) from Caenorhabditis elegans.